We begin with the raw amino-acid sequence, 279 residues long: NADPH-dependent 7-cyano-7-deazaguanine reductase (279 aa).

Position 86 to 88 (86 to 88 (IES)) interacts with substrate. Residue 88-89 (SK) coordinates NADPH. Cysteine 187 acts as the Thioimide intermediate in catalysis. Residue aspartate 194 is the Proton donor of the active site. 226–227 (HE) lines the substrate pocket. 255–256 (RG) is an NADPH binding site.

Belongs to the GTP cyclohydrolase I family. QueF type 2 subfamily. Homodimer.

It localises to the cytoplasm. It carries out the reaction 7-aminomethyl-7-carbaguanine + 2 NADP(+) = 7-cyano-7-deazaguanine + 2 NADPH + 3 H(+). It participates in tRNA modification; tRNA-queuosine biosynthesis. Its function is as follows. Catalyzes the NADPH-dependent reduction of 7-cyano-7-deazaguanine (preQ0) to 7-aminomethyl-7-deazaguanine (preQ1). This is NADPH-dependent 7-cyano-7-deazaguanine reductase from Haemophilus influenzae (strain PittEE).